Consider the following 212-residue polypeptide: Pyridoxine/pyridoxamine 5'-phosphate oxidase (212 aa).

Substrate contacts are provided by residues R8–Y11 and K66. FMN-binding positions include R61–K66, F76–T77, R82, K83, and Q105. Substrate contacts are provided by Y123, R127, and S131. FMN is bound by residues Q140–S141 and W185. Residue R191–H193 coordinates substrate. R195 serves as a coordination point for FMN.

This sequence belongs to the pyridoxamine 5'-phosphate oxidase family. In terms of assembly, homodimer. It depends on FMN as a cofactor.

The catalysed reaction is pyridoxamine 5'-phosphate + O2 + H2O = pyridoxal 5'-phosphate + H2O2 + NH4(+). It catalyses the reaction pyridoxine 5'-phosphate + O2 = pyridoxal 5'-phosphate + H2O2. It functions in the pathway cofactor metabolism; pyridoxal 5'-phosphate salvage; pyridoxal 5'-phosphate from pyridoxamine 5'-phosphate: step 1/1. Its pathway is cofactor metabolism; pyridoxal 5'-phosphate salvage; pyridoxal 5'-phosphate from pyridoxine 5'-phosphate: step 1/1. Catalyzes the oxidation of either pyridoxine 5'-phosphate (PNP) or pyridoxamine 5'-phosphate (PMP) into pyridoxal 5'-phosphate (PLP). The polypeptide is Pyridoxine/pyridoxamine 5'-phosphate oxidase (Shewanella denitrificans (strain OS217 / ATCC BAA-1090 / DSM 15013)).